Consider the following 282-residue polypeptide: Homeobox protein Hox-C12 (282 aa).

Disordered stretches follow at residues 94–129 and 147–214; these read YYRE…PLEP and GGDG…NSRS. A compositionally biased stretch (low complexity) spans 162–175; that stretch reads SCQSLESDSSSSLL. The homeobox DNA-binding region spans 214–273; that stretch reads SRKKRKPYSKLQLAELEGEFLVNEFITRQRRRELSDRLNLSDQQVKIWFQNRRMKKKRLL.

The protein belongs to the Abd-B homeobox family.

It is found in the nucleus. Its function is as follows. Sequence-specific transcription factor which is part of a developmental regulatory system that provides cells with specific positional identities on the anterior-posterior axis. This Homo sapiens (Human) protein is Homeobox protein Hox-C12 (HOXC12).